The primary structure comprises 313 residues: Pantoate--beta-alanine ligase (313 aa).

36 to 43 is an ATP binding site; the sequence is MGYLHQGH. His-43 acts as the Proton donor in catalysis. (R)-pantoate is bound at residue Gln-71. Residue Gln-71 coordinates beta-alanine. 178–181 is a binding site for ATP; it reads GKKD. (R)-pantoate is bound at residue Gln-184. 215–218 is a binding site for ATP; the sequence is MSSR.

The protein belongs to the pantothenate synthetase family. Homodimer.

It localises to the cytoplasm. The protein resides in the cytosol. It catalyses the reaction (R)-pantoate + beta-alanine + ATP = (R)-pantothenate + AMP + diphosphate + H(+). The protein operates within cofactor biosynthesis; (R)-pantothenate biosynthesis; (R)-pantothenate from (R)-pantoate and beta-alanine: step 1/1. Functionally, catalyzes the condensation of pantoate with beta-alanine to form pantothenate. Essential for panthotenate biosynthesis. This Oryza sativa subsp. japonica (Rice) protein is Pantoate--beta-alanine ligase (PANC).